We begin with the raw amino-acid sequence, 92 residues long: Small ribosomal subunit protein uS19 (92 aa).

Belongs to the universal ribosomal protein uS19 family.

Functionally, protein S19 forms a complex with S13 that binds strongly to the 16S ribosomal RNA. This chain is Small ribosomal subunit protein uS19, found in Bradyrhizobium diazoefficiens (strain JCM 10833 / BCRC 13528 / IAM 13628 / NBRC 14792 / USDA 110).